Reading from the N-terminus, the 511-residue chain is Inositol-3-phosphate synthase isozyme 1 (511 aa).

Positions 71, 72, 73, 74, 144, 181, 191, 194, 231, 232, 233, 234, 282, 283, 307, 310, 341, 342, 343, 356, 394, 395, 423, and 424 each coordinate NAD(+).

It belongs to the myo-inositol 1-phosphate synthase family. Homotrimer or homotetramer. Interacts with ATXR5 and ATXR6. Requires NAD(+) as cofactor. As to expression, expressed in siliques, leaves, roots, seed endosperm, but not in embryos. Highest expression in leaves, but restricted to vascular tissue in older leaves.

The protein localises to the cytoplasm. It is found in the cytosol. The protein resides in the nucleus. The catalysed reaction is D-glucose 6-phosphate = 1D-myo-inositol 3-phosphate. It functions in the pathway polyol metabolism; myo-inositol biosynthesis; myo-inositol from D-glucose 6-phosphate: step 1/2. Functionally, key enzyme in myo-inositol biosynthesis pathway that catalyzes the conversion of glucose 6-phosphate to 1-myo-inositol 1-phosphate in a NAD-dependent manner. Catalyzes the majority of myo-inositol synthesis required for plant growth and development. Acts as a repressor of programmed cell death and protects plant cells against cell death under high light intensity or long days. Controls its own transcription by inhibiting ATXR6 activity. Reduces the deposition of inhibitory histone marks on its own promoter. This is Inositol-3-phosphate synthase isozyme 1 (IPS1) from Arabidopsis thaliana (Mouse-ear cress).